The following is a 92-amino-acid chain: Large ribosomal subunit protein bL25 (92 aa).

This sequence belongs to the bacterial ribosomal protein bL25 family. Part of the 50S ribosomal subunit; part of the 5S rRNA/L5/L18/L25 subcomplex. Contacts the 5S rRNA. Binds to the 5S rRNA independently of L5 and L18.

In terms of biological role, this is one of the proteins that binds to the 5S RNA in the ribosome where it forms part of the central protuberance. This is Large ribosomal subunit protein bL25 from Aliivibrio fischeri (strain ATCC 700601 / ES114) (Vibrio fischeri).